The following is a 242-amino-acid chain: Uridylate kinase (242 aa).

15–18 serves as a coordination point for ATP; the sequence is KLSG. Gly-57 is a UMP binding site. Residues Gly-58 and Arg-62 each coordinate ATP. Residues Asp-78 and 139-146 contribute to the UMP site; that span reads TGNPFFTT. The ATP site is built by Thr-166, Tyr-172, and Asp-175.

Belongs to the UMP kinase family. As to quaternary structure, homohexamer.

It localises to the cytoplasm. The enzyme catalyses UMP + ATP = UDP + ADP. The protein operates within pyrimidine metabolism; CTP biosynthesis via de novo pathway; UDP from UMP (UMPK route): step 1/1. With respect to regulation, inhibited by UTP. Catalyzes the reversible phosphorylation of UMP to UDP. This chain is Uridylate kinase, found in Acinetobacter baumannii (strain ATCC 17978 / DSM 105126 / CIP 53.77 / LMG 1025 / NCDC KC755 / 5377).